The chain runs to 159 residues: U-actitoxin-Avd13b (159 aa).

The signal sequence occupies residues 1 to 18 (MKSIFLVFFAVCLVKAEA). The propeptide occupies 19 to 26 (GKGRKREP). Cystine bridges form between Cys33/Cys45 and Cys36/Cys52. Positions 59–60 (EP) are excised as a propeptide. 2 disulfide bridges follow: Cys67–Cys79 and Cys70–Cys86. Positions 93-94 (EP) are excised as a propeptide. Intrachain disulfides connect Cys101/Cys113 and Cys104/Cys120. Residues 127–128 (EP) constitute a propeptide that is removed on maturation. 2 disulfides stabilise this stretch: Cys135–Cys147 and Cys138–Cys154.

This sequence belongs to the sea anemone BBH family.

Its subcellular location is the secreted. The protein localises to the nematocyst. Functionally, inhibits ion channels. The sequence is that of U-actitoxin-Avd13b from Anemonia viridis (Snakelocks anemone).